The following is a 1034-amino-acid chain: Translation initiation factor IF-2 (1034 aa).

2 disordered regions span residues Ala-118–Glu-140 and Glu-154–Ala-446. 2 stretches are compositionally biased toward low complexity: residues Thr-162–Pro-178 and Pro-212–Ser-228. Residues Asp-304–Glu-315 show a composition bias toward basic and acidic residues. A tr-type G domain is found at Pro-535 to Glu-702. Positions Gly-544–Thr-551 are G1. Gly-544–Thr-551 provides a ligand contact to GTP. The segment at Gly-569–His-573 is G2. The interval Asp-590–Gly-593 is G3. GTP is bound by residues Asp-590–His-594 and Asn-644–Asp-647. The interval Asn-644–Asp-647 is G4. Positions Ser-680–Lys-682 are G5.

The protein belongs to the TRAFAC class translation factor GTPase superfamily. Classic translation factor GTPase family. IF-2 subfamily.

It is found in the cytoplasm. One of the essential components for the initiation of protein synthesis. Protects formylmethionyl-tRNA from spontaneous hydrolysis and promotes its binding to the 30S ribosomal subunits. Also involved in the hydrolysis of GTP during the formation of the 70S ribosomal complex. This is Translation initiation factor IF-2 from Bordetella avium (strain 197N).